The primary structure comprises 362 residues: HLA class I histocompatibility antigen, B alpha chain (362 aa).

An N-terminal signal peptide occupies residues 1 to 24 (MLVMAPRTVLLLLSAALALTETWA). The interval 3 to 11 (VMAPRTVLL) is VL9 epitope. The alpha-1 stretch occupies residues 25–114 (GSHSMRYFYT…LRGYYNQSEA (90 aa)). The Extracellular segment spans residues 25–309 (GSHSMRYFYT…PSSQSTVPIV (285 aa)). Residue Asn-87 participates in a peptide antigen binding. A Bw6 motif motif is present at residues 101–107 (SLRNLRG). Tyr-108 contacts a peptide antigen. The N-linked (GlcNAc...) asparagine glycan is linked to Asn-110. The alpha-2 stretch occupies residues 115 to 206 (GSHTLQSMYG…ENGKDKLERA (92 aa)). Cys-125 and Cys-188 form a disulfide bridge. The a peptide antigen site is built by Thr-167, Lys-170, Glu-176, Tyr-183, and Tyr-195. The tract at residues 207–298 (DPPKTHVTHH…GLPKPLTLRW (92 aa)) is alpha-3. An Ig-like C1-type domain is found at 209–295 (PKTHVTHHPI…QHEGLPKPLT (87 aa)). Residues Cys-227 and Cys-283 are joined by a disulfide bond. Residues 299 to 309 (EPSSQSTVPIV) form a connecting peptide region. A helical transmembrane segment spans residues 310–333 (GIVAGLAVLAVVVIGAVVAAVMCR). Topologically, residues 334-362 (RKSSGGKGGSYSQAACSDSAQGSDVSLTA) are cytoplasmic. Residues 337 to 362 (SGGKGGSYSQAACSDSAQGSDVSLTA) form a disordered region. The span at 346–362 (QAACSDSAQGSDVSLTA) shows a compositional bias: polar residues.

In terms of assembly, heterotrimer that consists of an alpha chain HLA-B, a beta chain B2M and a peptide (peptide-HLA-B-B2M). Early in biogenesis, HLA-B-B2M dimer interacts with the components of the peptide-loading complex composed of TAPBP, TAP1-TAP2, TAPBPL, PDIA3/ERP57 and CALR. Interacts with TAP1-TAP2 transporter via TAPBP; this interaction is obligatory for the loading of peptide epitopes delivered to the ER by TAP1-TAP2 transporter. Interacts with TAPBPL; TAPBPL binds peptide-free HLA-B-B2M complexes or those loaded with low affinity peptides, likely facilitating peptide exchange for higher affinity peptides. Only optimally assembled peptide-HLA-B-B2M trimer translocates to the surface of antigen-presenting cells, where it interacts with TCR and CD8 coreceptor on the surface of T cells. HLA-B (via polymorphic alpha-1 and alpha-2 domains) interacts with antigen-specific TCR (via CDR1, CDR2 and CDR3 domains). One HLA-B molecule (mainly via nonpolymorphic alpha-3 domain) interacts with one CD8A homodimer (via CDR-like loop); this interaction ensures peptide-HLA-B-B2M recognition by CD8-positive T cells only. Allele B*57:01 interacts (via Bw4 motif) with KIR3DL1 (via Ig-like C2-type domain); this interaction may interfere with peptide binding. Allele B*46:01 interacts with KIR2DL3. As to quaternary structure, (Microbial infection) Interacts with HTLV-1 accessory protein p12I.

The protein localises to the cell membrane. Its subcellular location is the endoplasmic reticulum membrane. Functionally, antigen-presenting major histocompatibility complex class I (MHCI) molecule. In complex with B2M/beta 2 microglobulin displays primarily viral and tumor-derived peptides on antigen-presenting cells for recognition by alpha-beta T cell receptor (TCR) on HLA-B-restricted CD8-positive T cells, guiding antigen-specific T cell immune response to eliminate infected or transformed cells. May also present self-peptides derived from the signal sequence of secreted or membrane proteins, although T cells specific for these peptides are usually inactivated to prevent autoreactivity. Both the peptide and the MHC molecule are recognized by TCR, the peptide is responsible for the fine specificity of antigen recognition and MHC residues account for the MHC restriction of T cells. Typically presents intracellular peptide antigens of 8 to 13 amino acids that arise from cytosolic proteolysis via constitutive proteasome and IFNG-induced immunoproteasome. Can bind different peptides containing allele-specific binding motifs, which are mainly defined by anchor residues at position 2 and 9. Its function is as follows. Allele B*07:02: Displays peptides sharing a common signature motif, namely a Pro residue at position 2 and mainly a Leu anchor residue at the C-terminus. Presents a long peptide (APRGPHGGAASGL) derived from the cancer-testis antigen CTAG1A/NY-ESO-1, eliciting a polyclonal CD8-positive T cell response against tumor cells. Presents viral epitopes derived from HIV-1 gag-pol (TPQDLNTML) and Nef (RPQVPLRPM). Presents an immunodominant epitope derived from SARS-CoV-2 N/nucleoprotein (SPRWYFYYL). Displays self-peptides including a peptide derived from the signal sequence of HLA-DPB1 (APRTVALTA). In terms of biological role, allele B*08:01: Presents to CD8-positive T cells viral epitopes derived from EBV/HHV-4 EBNA3 (QAKWRLQTL), eliciting cytotoxic T cell response. Allele B*13:02: Presents multiple HIV-1 epitopes derived from gag (RQANFLGKI, GQMREPRGSDI), nef (RQDILDLWI), gag-pol (RQYDQILIE, GQGQWTYQI) and rev (LQLPPLERL), all having in common a Gln residue at position 2 and mainly hydrophobic amino acids Leu, Ile or Val at the C-terminus. Associated with successful control of HIV-1 infection. Functionally, allele B*18:01: Preferentially presents octomeric and nonameric peptides sharing a common motif, namely a Glu at position 2 and Phe or Tyr anchor residues at the C-terminus. Presents an EBV/HHV-4 epitope derived from BZLF1 (SELEIKRY). May present to CD8-positive T cells an antigenic peptide derived from MAGEA3 (MEVDPIGHLY), triggering an anti-tumor immune response. May display a broad repertoire of self-peptides with a preference for peptides derived from RNA-binding proteins. Its function is as follows. Allele B*27:05: Presents to CD8-positive T cells immunodominant viral epitopes derived from HCV POLG (ARMILMTHF), HIV-1 gag (KRWIILGLNK), IAV NP (SRYWAIRTR), SARS-CoV-2 N/nucleoprotein (QRNAPRITF), EBV/HHV-4 EBNA4 (HRCQAIRKK) and EBV/HHV-4 EBNA6 (RRIYDLIEL), conferring longterm protection against viral infection. Can present self-peptides derived from cytosolic and nuclear proteins. All peptides carry an Arg at position 2. The peptide-bound form interacts with NK cell inhibitory receptor KIR3DL1 and inhibits NK cell activation in a peptide-specific way, being particularly sensitive to the nature of the amino acid side chain at position 8 of the antigenic peptide. KIR3DL1 fails to recognize HLA-B*27:05 in complex with B2M and EBV/HHV-4 EBNA6 (RRIYDLIEL) peptide, which can lead to increased activation of NK cells during infection. May present an altered repertoire of peptides in the absence of TAP1-TAP2 and TAPBPL. In terms of biological role, allele B*40:01: Presents immunodominant viral epitopes derived from EBV/HHV-4 LMP2 (IEDPPFNSL) and SARS-CoV-2 N/nucleoprotein (MEVTPSGTWL), triggering memory CD8-positive T cell response. Displays self-peptides sharing a signature motif, namely a Glu at position 2 and a Leu anchor residue at the C-terminus. Allele B*41:01: Displays self-peptides sharing a signature motif, namely a Glu at position 2 and Ala or Pro anchor residues at the C-terminus. Functionally, allele B*44:02: Presents immunodominant viral epitopes derived from EBV/HHV-4 EBNA4 (VEITPYKPTW) and EBNA6 (AEGGVGWRHW, EENLLDFVRF), triggering memory CD8-positive T cell response. Displays self-peptides sharing a signature motif, namely a Glu at position 2 and Phe, Tyr or Trp anchor residues at the C-terminus. Its function is as follows. Allele B*45:01: Displays self-peptides sharing a signature motif, namely a Glu at position 2 and Ala or Pro anchor residues at the C-terminus. In terms of biological role, allele B*46:01: Preferentially presents nonameric peptides sharing a signature motif, namely Ala and Leu at position 2 and Tyr, Phe, Leu, or Met anchor residues at the C-terminus. The peptide-bound form interacts with KIR2DL3 and inhibits NK cell cytotoxic response in a peptide-specific way. Allele B*47:01: Displays self-peptides sharing a signature motif, namely an Asp at position 2 and Leu or Met anchor residues at the C-terminus. Functionally, allele B*49:01: Displays self-peptides sharing a signature motif, namely a Glu at position 2 and Ile or Val anchor residues at the C-terminus. Its function is as follows. Allele B*50:01: Displays self-peptides sharing a signature motif, namely a Glu at position 2 and Ala or Pro anchor residues at the C-terminus. In terms of biological role, allele B*51:01: Presents an octomeric HIV-1 epitope derived from gag-pol (TAFTIPSI) to the public TRAV17/TRBV7-3 TCR clonotype, strongly suppressing HIV-1 replication. Allele B*54:01: Displays peptides sharing a common signature motif, namely a Pro residue at position 2 and Ala anchor residue at the C-terminus. Functionally, allele B*55:01: Displays peptides sharing a common signature motif, namely a Pro residue at position 2 and Ala anchor residue at the C-terminus. Its function is as follows. Allele B*56:01: Displays peptides sharing a common signature motif, namely a Pro residue at position 2 and Ala anchor residue at the C-terminus. In terms of biological role, allele B*57:01: The peptide-bound form recognizes KIR3DL1 and inhibits NK cell cytotoxic response. Presents HIV gag peptides (immunodominant KAFSPEVIPMF and subdominant KALGPAATL epitopes) predominantly to CD8-positive T cell clones expressing a TRAV41-containing TCR, triggering HLA-B-restricted T cell responses. Allele B*67:01: Displays peptides sharing a common signature motif, namely a Pro residue at position 2 and Leu anchor residue at the C-terminus. This chain is HLA class I histocompatibility antigen, B alpha chain, found in Homo sapiens (Human).